Consider the following 509-residue polypeptide: Activin receptor type-1 (509 aa).

Positions 1 to 20 are cleaved as a signal peptide; it reads MVDGVMILPVLMMMAFPSPS. The Extracellular portion of the chain corresponds to 21 to 123; that stretch reads VEDEKPKVNQ…FPGTQNFHLE (103 aa). Asparagine 102 is a glycosylation site (N-linked (GlcNAc...) asparagine). Residues 124–146 form a helical membrane-spanning segment; sequence VGLIILSVVFAVCLLACILGVAL. Residues 147–509 lie on the Cytoplasmic side of the membrane; the sequence is RKFKRRNQER…NSLDKLKTDC (363 aa). Residues 178–207 enclose the GS domain; it reads STLAELLDHSCTSGSGSGLPFLVQRTVARQ. A Protein kinase domain is found at 208 to 502; it reads ITLLECVGKG…KTLTKIDNSL (295 aa). Residues 214–222 and lysine 235 contribute to the ATP site; that span reads VGKGRYGEV. The active-site Proton acceptor is the aspartate 336. Residue serine 501 is modified to Phosphoserine.

This sequence belongs to the protein kinase superfamily. TKL Ser/Thr protein kinase family. TGFB receptor subfamily. In terms of assembly, interacts with FKBP1A. Interacts with FCHO1. Interacts with CLU. Interacts with type II receptors AMHR2 and ACVR2A. Interacts with BMP7. Interacts with BMP9. Interacts with BMP6 (when glycosylated); the interaction may induce HAMP expression. Interacts with TSC22D1/TSC-22. It depends on Mg(2+) as a cofactor. Mn(2+) is required as a cofactor. In terms of tissue distribution, highly expressed in bone during developmental stages. Expressed in normal parenchymal cells, endothelial cells, fibroblasts and tumor-derived epithelial cells.

Its subcellular location is the membrane. It carries out the reaction L-threonyl-[receptor-protein] + ATP = O-phospho-L-threonyl-[receptor-protein] + ADP + H(+). It catalyses the reaction L-seryl-[receptor-protein] + ATP = O-phospho-L-seryl-[receptor-protein] + ADP + H(+). Bone morphogenetic protein (BMP) type I receptor that is involved in a wide variety of biological processes, including bone, heart, cartilage, nervous, and reproductive system development and regulation. As a type I receptor, forms heterotetrameric receptor complexes with the type II receptors AMHR2, ACVR2A ors ACVR2B. Upon binding of ligands such as BMP7 or BMP9 to the heteromeric complexes, type II receptors transphosphorylate ACVR1 intracellular domain. In turn, ACVR1 kinase domain is activated and subsequently phosphorylates SMAD1/5/8 proteins that transduce the signal. In addition to its role in mediating BMP pathway-specific signaling, suppresses TGFbeta/activin pathway signaling by interfering with the binding of activin to its type II receptor. Besides canonical SMAD signaling, can activate non-canonical pathways such as p38 mitogen-activated protein kinases/MAPKs. May promote the expression of HAMP, potentially via its interaction with BMP6. This Mus musculus (Mouse) protein is Activin receptor type-1 (Acvr1).